The primary structure comprises 190 residues: UPF0200 protein OE_4442F (190 aa).

Position 8–15 (8–15 (GMPGSGKS)) interacts with ATP. Residues 120–144 (ARIEDRDRPGDTDGEPLDAREDRER) form a disordered region.

The protein belongs to the UPF0200 family.

This chain is UPF0200 protein OE_4442F, found in Halobacterium salinarum (strain ATCC 29341 / DSM 671 / R1).